Here is a 449-residue protein sequence, read N- to C-terminus: UDP-N-acetylglucosamine 1-carboxyvinyltransferase (449 aa).

The segment covering 1–12 (MQVTVNEHDAVE) has biased composition (basic and acidic residues). The interval 1 to 30 (MQVTVNEHDAVERVATATPAGNREAHAHGT) is disordered. Residue 51–52 (KN) coordinates phosphoenolpyruvate. Arg121 contacts UDP-N-acetyl-alpha-D-glucosamine. The active-site Proton donor is Cys145. Cys145 is subject to 2-(S-cysteinyl)pyruvic acid O-phosphothioketal. UDP-N-acetyl-alpha-D-glucosamine-binding positions include 150 to 154 (RPVDQ), Asp333, and Ile355.

This sequence belongs to the EPSP synthase family. MurA subfamily.

The protein resides in the cytoplasm. The catalysed reaction is phosphoenolpyruvate + UDP-N-acetyl-alpha-D-glucosamine = UDP-N-acetyl-3-O-(1-carboxyvinyl)-alpha-D-glucosamine + phosphate. The protein operates within cell wall biogenesis; peptidoglycan biosynthesis. Its function is as follows. Cell wall formation. Adds enolpyruvyl to UDP-N-acetylglucosamine. This Burkholderia pseudomallei (strain 1710b) protein is UDP-N-acetylglucosamine 1-carboxyvinyltransferase.